The chain runs to 478 residues: Lysosome membrane protein 2 (478 aa).

Topologically, residues methionine 1 to cysteine 4 are cytoplasmic. A helical membrane pass occupies residues cysteine 5–arginine 27. Over valine 28–leucine 433 the chain is Lumenal. N-linked (GlcNAc...) asparagine glycans are attached at residues asparagine 45, asparagine 68, and asparagine 105. An important for interaction with GBA1 region spans residues isoleucine 155–phenylalanine 191. 4 N-linked (GlcNAc...) asparagine glycosylation sites follow: asparagine 206, asparagine 224, asparagine 249, and asparagine 304. 2 disulfides stabilise this stretch: cysteine 274-cysteine 329 and cysteine 312-cysteine 318. Asparagine 325, asparagine 412, and asparagine 430 each carry an N-linked (GlcNAc...) asparagine glycan. A helical transmembrane segment spans residues isoleucine 434–lysine 459. Residues glycine 460–threonine 478 lie on the Cytoplasmic side of the membrane.

The protein belongs to the CD36 family. As to quaternary structure, interacts with GBA1. In terms of assembly, (Microbial infection) Interacts with enterovirus 71 capsid proteins VP1 and VP2.

The protein resides in the lysosome membrane. Its function is as follows. Acts as a lysosomal receptor for glucosylceramidase (GBA1) targeting. Functionally, (Microbial infection) Acts as a receptor for enterovirus 71. This chain is Lysosome membrane protein 2 (SCARB2), found in Homo sapiens (Human).